The sequence spans 312 residues: Olfactory receptor 1F1 (312 aa).

Topologically, residues 1–25 are extracellular; that stretch reads MSGTNQSSVSEFLLLGLSRQPQQQH. A glycan (N-linked (GlcNAc...) asparagine) is linked at asparagine 5. The chain crosses the membrane as a helical span at residues 26–49; that stretch reads LLFVFFLSMYLATVLGNLLIILSV. Over 50–57 the chain is Cytoplasmic; sequence SIDSCLHT. A helical transmembrane segment spans residues 58 to 79; the sequence is PMYFFLSNLSFVDICFSFTTVP. The Extracellular portion of the chain corresponds to 80 to 100; sequence KMLANHILETQTISFCGCLTQ. A disulfide bridge links cysteine 97 with cysteine 189. A helical transmembrane segment spans residues 101–120; sequence MYFVFMFVDMDNFLLAVMAY. Over 121–139 the chain is Cytoplasmic; that stretch reads DHFVAVCHPLHYTAKMTHQ. Residues 140–158 traverse the membrane as a helical segment; the sequence is LCALLVAGLWVVANLNVLL. At 159 to 196 the chain is on the extracellular side; sequence HTLLMAPLSFCADNAITHFFCDVTPLLKLSCSDTHLNE. The helical transmembrane segment at 197–219 threads the bilayer; sequence VIILSEGALVMITPFLCILASYM. Residues 220-236 lie on the Cytoplasmic side of the membrane; sequence HITCTVLKVPSTKGRWK. A helical transmembrane segment spans residues 237–259; the sequence is AFSTCGSHLAVVLLFYSTIIAVY. Residues 260-272 lie on the Extracellular side of the membrane; that stretch reads FNPLSSHSAEKDT. A helical transmembrane segment spans residues 273-292; that stretch reads MATVLYTVVTPMLNPFIYSL. Over 293 to 312 the chain is Cytoplasmic; it reads RNRYLKGALKKVVGRVVFSV.

The protein belongs to the G-protein coupled receptor 1 family.

It localises to the cell membrane. Functionally, odorant receptor. The protein is Olfactory receptor 1F1 (OR1F1) of Homo sapiens (Human).